Consider the following 301-residue polypeptide: GTPase Era (301 aa).

Residues 4–173 (KAGFVALIGK…LECISKHLIP (170 aa)) form the Era-type G domain. Positions 12 to 19 (GKPNAGKS) are G1. A GTP-binding site is contributed by 12-19 (GKPNAGKS). Residues 38-42 (NATRK) form a G2 region. Positions 64–67 (DTPG) are G3. GTP is bound by residues 64-68 (DTPGL) and 122-125 (SKID). The segment at 122 to 125 (SKID) is G4. The G5 stretch occupies residues 152–154 (LSA). The 77-residue stretch at 204-280 (LSDEIPYESD…FLNLQVIAQK (77 aa)) folds into the KH type-2 domain.

Belongs to the TRAFAC class TrmE-Era-EngA-EngB-Septin-like GTPase superfamily. Era GTPase family. Monomer.

It localises to the cytoplasm. It is found in the cell inner membrane. Its function is as follows. An essential GTPase that binds both GDP and GTP, with rapid nucleotide exchange. Plays a role in 16S rRNA processing and 30S ribosomal subunit biogenesis and possibly also in cell cycle regulation and energy metabolism. The sequence is that of GTPase Era from Helicobacter pylori (strain HPAG1).